The sequence spans 328 residues: Probable G-protein coupled receptor 82 (328 aa).

Residues Met-1–Ser-11 are Extracellular-facing. Residues Asn-3 and Asn-4 are each glycosylated (N-linked (GlcNAc...) asparagine). Residues Val-12–Gly-32 traverse the membrane as a helical segment. Over Asn-33–Ala-55 the chain is Cytoplasmic. A helical transmembrane segment spans residues Asn-56–Leu-76. The Extracellular portion of the chain corresponds to Arg-77–Asn-92. A helical transmembrane segment spans residues Phe-93–Ile-115. Residues Ser-116–Cys-156 are Cytoplasmic-facing. A helical membrane pass occupies residues Ile-157–Val-177. Over Glu-178–Arg-197 the chain is Extracellular. A helical membrane pass occupies residues Pro-198–Val-218. The Cytoplasmic segment spans residues Thr-219 to Leu-251. The chain crosses the membrane as a helical span at residues Leu-252–Phe-272. The Extracellular segment spans residues Tyr-273–Ser-328.

The protein belongs to the G-protein coupled receptor 1 family.

The protein resides in the cell membrane. Functionally, orphan receptor. In Mus musculus (Mouse), this protein is Probable G-protein coupled receptor 82 (Gpr82).